We begin with the raw amino-acid sequence, 293 residues long: Non-homologous end joining protein Ku (293 aa).

The Ku domain occupies 10–195 (ISFGLVHIPV…KLDKRELEMA (186 aa)). Residues 216-229 (SDKIMKLVEEKAAK) form a required for dimerization region. Positions 260-293 (RSRAGGGKDKGSEKAGADAKGRAKSGASRSRRKA) are disordered. A compositionally biased stretch (basic and acidic residues) spans 265 to 280 (GGKDKGSEKAGADAKG).

This sequence belongs to the prokaryotic Ku family. In terms of assembly, homodimer, may form higher-order multimers on DNA. Non-dimerized protein does not stimulate LigD ligase activity. Probably interacts with LigD.

Its function is as follows. With LigD forms a non-homologous end joining (NHEJ) DNA repair enzyme, which repairs dsDNA breaks with reduced fidelity. Stimulates rNTP addition to DSB and end joining (ligation) of linear DNA by LigD, on 3'-overhangs and probably also 5'-overhangs and blunt dsDNA breaks. Binds both ends of linear dsDNA protecting it from exonuclease activity. The chain is Non-homologous end joining protein Ku from Pseudomonas aeruginosa (strain ATCC 15692 / DSM 22644 / CIP 104116 / JCM 14847 / LMG 12228 / 1C / PRS 101 / PAO1).